The following is a 236-amino-acid chain: Virion protein US10 homolog (236 aa).

The interval 1-32 (MDGAYGHVHNGSPMAVDGEESGAGTGTGAGAD) is disordered. Residues 21 to 31 (SGAGTGTGAGA) are compositionally biased toward gly residues. Residues 138-150 (CAYWCCLGHAFAC) fold into a zinc finger.

It belongs to the herpesviridae US10 family. Phosphorylated.

The protein localises to the virion tegument. It is found in the host nucleus matrix. This chain is Virion protein US10 homolog, found in Equine herpesvirus 1 (strain Ab4p) (EHV-1).